We begin with the raw amino-acid sequence, 793 residues long: Probable alpha-fucosidase A (793 aa).

An N-terminal signal peptide occupies residues 1 to 20 (MLISGSSAALCALALPFAAA). 13 N-linked (GlcNAc...) asparagine glycosylation sites follow: Asn-30, Asn-83, Asn-100, Asn-104, Asn-123, Asn-179, Asn-199, Asn-234, Asn-323, Asn-597, Asn-622, Asn-660, and Asn-757.

The protein belongs to the glycosyl hydrolase 95 family.

It localises to the secreted. It catalyses the reaction an alpha-L-fucoside + H2O = L-fucose + an alcohol. In terms of biological role, alpha-fucosidase involved in degradation of fucosylated xyloglucans. Hydrolyzes alpha-1,2-linked fucose. The protein is Probable alpha-fucosidase A (afcA) of Aspergillus niger (strain ATCC MYA-4892 / CBS 513.88 / FGSC A1513).